Reading from the N-terminus, the 643-residue chain is Nucleolar GTP-binding protein 1 (643 aa).

The OBG-type G domain occupies 168 to 340; the sequence is RTLLICGYPN…VRNKACEKLL (173 aa). Residues 174–181, 220–224, and 288–291 each bind GTP; these read GYPNVGKS, DTPGI, and NKTD. The disordered stretch occupies residues 568–643; that stretch reads GDQEDSAPAG…KRGVGKTDFR (76 aa). Residues 594–622 are compositionally biased toward basic and acidic residues; that stretch reads MRSKAERMAKLERRERNRMARAGESDRHA.

The protein belongs to the TRAFAC class OBG-HflX-like GTPase superfamily. OBG GTPase family. NOG subfamily.

The protein localises to the nucleus. It is found in the nucleolus. Functionally, involved in the biogenesis of the 60S ribosomal subunit. This chain is Nucleolar GTP-binding protein 1 (NOG1), found in Kluyveromyces lactis (strain ATCC 8585 / CBS 2359 / DSM 70799 / NBRC 1267 / NRRL Y-1140 / WM37) (Yeast).